The chain runs to 89 residues: MSITAERKAEVIQGNANKAGDTGSPEVQVAILSERIVNLTAHFKTHTKDNHSRRGLLKLVSTRRSLLDYVKKKDEARYKALLEKHNIRR.

A compositionally biased stretch (basic and acidic residues) spans Met1–Glu10. The segment at Met1–Ser24 is disordered.

It belongs to the universal ribosomal protein uS15 family. In terms of assembly, part of the 30S ribosomal subunit. Forms a bridge to the 50S subunit in the 70S ribosome, contacting the 23S rRNA.

In terms of biological role, one of the primary rRNA binding proteins, it binds directly to 16S rRNA where it helps nucleate assembly of the platform of the 30S subunit by binding and bridging several RNA helices of the 16S rRNA. Functionally, forms an intersubunit bridge (bridge B4) with the 23S rRNA of the 50S subunit in the ribosome. This Rhodopseudomonas palustris (strain BisB5) protein is Small ribosomal subunit protein uS15.